A 488-amino-acid chain; its full sequence is MIPVVALVGRPNVGKSTLFNRLTRTRDALVADYPGLTRDRKYGRAHLSGYEFIVVDTGGIDGTEEGIETKMAEQSLAAIEEADVVLFMTDARAGLTAADLAIAQHLRSRDKITFVVANKVDGIDADSACGEFWQLGLGEVYQMAAAQGRGVTGLVEYALAPFAEAMGLVRDDDGEVVTDERNYTEEEAEAEQQRLAEQPIKLAIIGKPNVGKSTLTNRILGEERVVVYDQPGTTRDSVYIPMERDGRNYVLIDTAGVRRRARVHEVIEKFSVIKTLKAVEDSNVVLLVIDAHEGIAEQDLGLLGFVLNSGRALVLAVNKWDGLDQDVKDRVKTELDRRLGFIDFARIHFISALHGTGVGHLFESIEEAYDSATRRVSTSMLTRIMQMAQDDHQPPMVNGRRVKLKYAHVGGYNPPIVVVHGNQVSRLPDSYKRYMMNYYRRALKVVGTPIQLRFHEGDNPFEGRKEKLTLSQERRRKRMMSHIKSKKA.

2 EngA-type G domains span residues 3 to 166 and 200 to 373; these read PVVA…AEAM and IKLA…DSAT. Residues 9-16, 56-60, 118-121, 206-213, 253-257, and 318-321 contribute to the GTP site; these read GRPNVGKS, DTGGI, NKVD, GKPNVGKS, DTAGV, and NKWD. In terms of domain architecture, KH-like spans 374-458; sequence RRVSTSMLTR…PIQLRFHEGD (85 aa).

The protein belongs to the TRAFAC class TrmE-Era-EngA-EngB-Septin-like GTPase superfamily. EngA (Der) GTPase family. In terms of assembly, associates with the 50S ribosomal subunit.

Functionally, GTPase that plays an essential role in the late steps of ribosome biogenesis. This is GTPase Der from Shewanella amazonensis (strain ATCC BAA-1098 / SB2B).